The primary structure comprises 876 residues: Leucine--tRNA ligase (876 aa).

The 'HIGH' region motif lies at 43–53 (PYPSGRIHIGH). A 'KMSKS' region motif is present at residues 632-636 (KMSKS). Residue lysine 635 participates in ATP binding.

It belongs to the class-I aminoacyl-tRNA synthetase family.

The protein resides in the cytoplasm. It catalyses the reaction tRNA(Leu) + L-leucine + ATP = L-leucyl-tRNA(Leu) + AMP + diphosphate. The sequence is that of Leucine--tRNA ligase from Allorhizobium ampelinum (strain ATCC BAA-846 / DSM 112012 / S4) (Agrobacterium vitis (strain S4)).